Reading from the N-terminus, the 1067-residue chain is Lon protease homolog, mitochondrial (1067 aa).

Residues 1 to 36 (MITRLSGACLRRSGAKRNWPREHLVHRSLLASFSTT) constitute a mitochondrion transit peptide. Positions 55-82 (KSKEPKDNKPLDNKNDPKKTHNEDESHT) are enriched in basic and acidic residues. Disordered stretches follow at residues 55-142 (KSKE…MPLN) and 262-314 (IPPK…ESTP). The span at 128–139 (FELGGEENEDEM) shows a compositional bias: acidic residues. A Lon N-terminal domain is found at 162–425 (LLALPIARRP…KALYVLKKEL (264 aa)). Over residues 293 to 311 (VKSDLKQDNGKEEPEKEVE) the composition is skewed to basic and acidic residues. 578–585 (GPPGVGKT) serves as a coordination point for ATP. The interval 791 to 820 (NSKEKSTGKSGKKTSPQSSEDAANKEASSV) is disordered. The Lon proteolytic domain occupies 854–1040 (TTPPGVVMGL…DDVFKRVFSN (187 aa)). Active-site residues include Ser946 and Lys989.

The protein belongs to the peptidase S16 family. As to quaternary structure, homohexamer or homoheptamer. Organized in a ring with a central cavity.

It is found in the mitochondrion matrix. The enzyme catalyses Hydrolysis of proteins in presence of ATP.. Its function is as follows. ATP-dependent serine protease that mediates the selective degradation of misfolded, unassembled or oxidatively damaged polypeptides as well as certain short-lived regulatory proteins in the mitochondrial matrix. May also have a chaperone function in the assembly of inner membrane protein complexes. Participates in the regulation of mitochondrial gene expression and in the maintenance of the integrity of the mitochondrial genome. Binds to mitochondrial DNA in a site-specific manner. In Schizosaccharomyces pombe (strain 972 / ATCC 24843) (Fission yeast), this protein is Lon protease homolog, mitochondrial (pim1).